Consider the following 178-residue polypeptide: Large ribosomal subunit protein uL6 (178 aa).

This sequence belongs to the universal ribosomal protein uL6 family. Part of the 50S ribosomal subunit.

Its function is as follows. This protein binds to the 23S rRNA, and is important in its secondary structure. It is located near the subunit interface in the base of the L7/L12 stalk, and near the tRNA binding site of the peptidyltransferase center. The sequence is that of Large ribosomal subunit protein uL6 from Helicobacter acinonychis (strain Sheeba).